We begin with the raw amino-acid sequence, 1072 residues long: Carbamoyl phosphate synthase large chain (1072 aa).

Residues 1-401 (MPKYKDISKV…SLLKAVRSLE (401 aa)) are carboxyphosphate synthetic domain. 12 residues coordinate ATP: Arg129, Arg169, Gly175, Gly176, Lys208, Leu210, Glu215, Gly241, Val242, His243, Gln284, and Glu298. The ATP-grasp 1 domain occupies 133 to 327 (KRKMQEIGEP…IAKIAAKIAI (195 aa)). Gln284, Glu298, and Asn300 together coordinate Mg(2+). 3 residues coordinate Mn(2+): Gln284, Glu298, and Asn300. Residues 402 to 544 (IKAYGLRLDS…YIYSTYCEED (143 aa)) form an oligomerization domain region. Positions 545 to 929 (EVETHDIPKV…ALYKALEGAG (385 aa)) are carbamoyl phosphate synthetic domain. Positions 671-861 (SKLLKELNIN…MVKLAVEVAL (191 aa)) constitute an ATP-grasp 2 domain. Arg707, Lys746, Ile748, Glu752, Gly777, Val778, His779, Ser780, Gln820, and Glu832 together coordinate ATP. 3 residues coordinate Mg(2+): Gln820, Glu832, and Asn834. Residues Gln820, Glu832, and Asn834 each coordinate Mn(2+). Positions 930-1072 (LKIPKKGKIL…QKDNVKNLVL (143 aa)) constitute an MGS-like domain. Positions 930–1072 (LKIPKKGKIL…QKDNVKNLVL (143 aa)) are allosteric domain.

Belongs to the CarB family. Composed of two chains; the small (or glutamine) chain promotes the hydrolysis of glutamine to ammonia, which is used by the large (or ammonia) chain to synthesize carbamoyl phosphate. Tetramer of heterodimers (alpha,beta)4. Mg(2+) serves as cofactor. The cofactor is Mn(2+).

The catalysed reaction is hydrogencarbonate + L-glutamine + 2 ATP + H2O = carbamoyl phosphate + L-glutamate + 2 ADP + phosphate + 2 H(+). It catalyses the reaction hydrogencarbonate + NH4(+) + 2 ATP = carbamoyl phosphate + 2 ADP + phosphate + 2 H(+). It functions in the pathway amino-acid biosynthesis; L-arginine biosynthesis; carbamoyl phosphate from bicarbonate: step 1/1. Its pathway is pyrimidine metabolism; UMP biosynthesis via de novo pathway; (S)-dihydroorotate from bicarbonate: step 1/3. Large subunit of the glutamine-dependent carbamoyl phosphate synthetase (CPSase). CPSase catalyzes the formation of carbamoyl phosphate from the ammonia moiety of glutamine, carbonate, and phosphate donated by ATP, constituting the first step of 2 biosynthetic pathways, one leading to arginine and/or urea and the other to pyrimidine nucleotides. The large subunit (synthetase) binds the substrates ammonia (free or transferred from glutamine from the small subunit), hydrogencarbonate and ATP and carries out an ATP-coupled ligase reaction, activating hydrogencarbonate by forming carboxy phosphate which reacts with ammonia to form carbamoyl phosphate. The chain is Carbamoyl phosphate synthase large chain from Caldanaerobacter subterraneus subsp. tengcongensis (strain DSM 15242 / JCM 11007 / NBRC 100824 / MB4) (Thermoanaerobacter tengcongensis).